The primary structure comprises 541 residues: Glucose-6-phosphate isomerase (541 aa).

The active-site Proton donor is E346. Residues H377 and K506 contribute to the active site.

This sequence belongs to the GPI family.

The protein localises to the cytoplasm. It catalyses the reaction alpha-D-glucose 6-phosphate = beta-D-fructose 6-phosphate. Its pathway is carbohydrate biosynthesis; gluconeogenesis. It participates in carbohydrate degradation; glycolysis; D-glyceraldehyde 3-phosphate and glycerone phosphate from D-glucose: step 2/4. Catalyzes the reversible isomerization of glucose-6-phosphate to fructose-6-phosphate. This is Glucose-6-phosphate isomerase from Rhizobium leguminosarum bv. trifolii (strain WSM2304).